The chain runs to 58 residues: UPF0391 membrane protein GM21_0108 (58 aa).

Helical transmembrane passes span 4–24 (WALIFFIIAIIAAVFGFGGIA) and 33–53 (VLFYLFLVVAVVMLVSALLAG).

This sequence belongs to the UPF0391 family.

It is found in the cell membrane. This Geobacter sp. (strain M21) protein is UPF0391 membrane protein GM21_0108.